We begin with the raw amino-acid sequence, 484 residues long: Phosphatidylinositol N-acetylglucosaminyltransferase subunit A (484 aa).

Residues 1–421 (MACRGGAGNG…RLDRLISHCG (421 aa)) are Cytoplasmic-facing. Residues serine 21 and serine 24 each carry the phosphoserine modification. A helical transmembrane segment spans residues 422 to 442 (PVTGYIFALLAVFNFLFLIFL). The Lumenal segment spans residues 443–484 (RWMTPDSIIDVAIDATGPRGAWTNNYSHSKRGGENNEISETR). The N-linked (GlcNAc...) asparagine glycan is linked to asparagine 467.

It belongs to the glycosyltransferase group 1 family. Glycosyltransferase 4 subfamily. As to quaternary structure, component of the glycosylphosphatidylinositol-N-acetylglucosaminyltransferase (GPI-GnT) complex composed at least by PIGA, PIGC, PIGH, PIGP, PIGQ, PIGY and DPM2. Interacts with PIGC, PIGH, PIGP, PIGQ and DPM2. Interacts directly with PIGY; this interaction regulates glycosylphosphatidylinositol-N-acetylglucosaminyltransferase activity. Interacts with PIGQ.

The protein localises to the endoplasmic reticulum membrane. It carries out the reaction a 1,2-diacyl-sn-glycero-3-phospho-(1D-myo-inositol) + UDP-N-acetyl-alpha-D-glucosamine = a 6-(N-acetyl-alpha-D-glucosaminyl)-1-(1,2-diacyl-sn-glycero-3-phospho)-1D-myo-inositol + UDP + H(+). It functions in the pathway glycolipid biosynthesis; glycosylphosphatidylinositol-anchor biosynthesis. Functionally, catalytic subunit of the glycosylphosphatidylinositol-N-acetylglucosaminyltransferase (GPI-GnT) complex that catalyzes the transfer of N-acetylglucosamine from UDP-N-acetylglucosamine to phosphatidylinositol and participates in the first step of GPI biosynthesis. The polypeptide is Phosphatidylinositol N-acetylglucosaminyltransferase subunit A (Homo sapiens (Human)).